Consider the following 1136-residue polypeptide: Probable LRR receptor-like serine/threonine-protein kinase At4g36180 (1136 aa).

The signal sequence occupies residues 1–22 (MAMDISLFFIFLVIYAPLVSYA). Residues 23–751 (DESQAEIDAL…TAEGKKKKRK (729 aa)) lie on the Extracellular side of the membrane. LRR repeat units lie at residues 93 to 115 (MLRKLSLRSNSFNGTIPTSLAYC), 117 to 139 (RLLSVFLQYNSLSGKLPPAMRNL), 141 to 162 (SLEVFNVAGNRLSGEIPVGLPS), 163 to 186 (SLQFLDISSNTFSGQIPSGLANLT), 187 to 210 (QLQLLNLSYNQLTGEIPASLGNLQ), 211 to 233 (SLQYLWLDFNLLQGTLPSAISNC), 235 to 256 (SLVHLSASENEIGGVIPAAYGA), and 259 to 280 (KLEVLSLSNNNFSGTVPFSLFC). 2 N-linked (GlcNAc...) asparagine glycosylation sites follow: Asn-105 and Asn-138. N-linked (GlcNAc...) asparagine glycans are attached at residues Asn-184, Asn-192, and Asn-232. Residues Asn-269 and Asn-281 are each glycosylated (N-linked (GlcNAc...) asparagine). LRR repeat units lie at residues 283–304 (SLTIVQLGFNAFSDIVRPETTA), 309–330 (GLQVLDLQENRISGRFPLWLTN), 333–355 (SLKNLDVSGNLFSGEIPPDIGNL), 357–379 (RLEELKLANNSLTGEIPVEIKQC), 381–403 (SLDVLDFEGNSLKGQIPEFLGYM), 405–426 (ALKVLSLGRNSFSGYVPSSMVN), 429–452 (QLERLNLGENNLNGSFPVELMALT), 453–479 (SLSELDLSGNRFSGAVPVSISNLSNLS), 480–500 (FLNLSGNGFSGEIPASVGNLF), 501–524 (KLTALDLSKQNMSGEVPVELSGLP), 525–546 (NVQVIALQGNNFSGVVPEGFSS), 549–571 (SLRYVNLSSNSFSGEIPQTFGFL), 573–595 (LLVSLSLSDNHISGSIPPEIGNC), 597–620 (ALEVLELRSNRLMGHIPADLSRLP), 621–643 (RLKVLDLGQNNLSGEIPPEISQS), 645–666 (SLNSLSLDHNHLSGVIPGSFSG), 669–691 (NLTKMDLSVNNLTGEIPASLALI), and 694–716 (NLVYFNVSSNNLKGEIPASLGSR). Residue Asn-365 is glycosylated (N-linked (GlcNAc...) asparagine). N-linked (GlcNAc...) asparagine glycosylation is found at Asn-441, Asn-474, Asn-477, Asn-482, Asn-511, Asn-535, Asn-554, and Asn-594. Asn-631 carries an N-linked (GlcNAc...) asparagine glycan. Residues Asn-669, Asn-679, Asn-699, and Asn-719 are each glycosylated (N-linked (GlcNAc...) asparagine). Residues 752–772 (MILMIVMAAIGAFLLSLFCCF) form a helical membrane-spanning segment. The Cytoplasmic portion of the chain corresponds to 773–1136 (YVYTLLKWRK…ADPTSQPSPA (364 aa)). The tract at residues 786–819 (QQSTTGEKKRSPGRTSAGSRVRSSTSRSSTENGE) is disordered. Low complexity predominate over residues 799-815 (RTSAGSRVRSSTSRSST). Phosphothreonine occurs at positions 830 and 838. The region spanning 841 to 1123 (FDEENVLSRT…LEGCRVGPDV (283 aa)) is the Protein kinase domain. A phosphotyrosine mark is found at Tyr-915 and Tyr-1010.

Belongs to the protein kinase superfamily. Ser/Thr protein kinase family.

Its subcellular location is the cell membrane. It catalyses the reaction L-seryl-[protein] + ATP = O-phospho-L-seryl-[protein] + ADP + H(+). The enzyme catalyses L-threonyl-[protein] + ATP = O-phospho-L-threonyl-[protein] + ADP + H(+). In Arabidopsis thaliana (Mouse-ear cress), this protein is Probable LRR receptor-like serine/threonine-protein kinase At4g36180.